We begin with the raw amino-acid sequence, 220 residues long: Claudin-3 (220 aa).

The Cytoplasmic segment spans residues 1-8 (MSMGLEIT). The chain crosses the membrane as a helical span at residues 9 to 29 (GTALAVLGWLGTIVCCALPMW). Residues 30 to 80 (RVSAFIGSNIITSQNIWEGLWMNCVVQSTGQMQCKVYDSLLALPQDLQAAR) lie on the Extracellular side of the membrane. A helical transmembrane segment spans residues 81–101 (ALIVVAILLAAFGLLVALVGA). At 102 to 115 (QCTNCVQDDTAKAK) the chain is on the cytoplasmic side. Residues 116-136 (ITIVAGVLFLLAALLTLVPVS) traverse the membrane as a helical segment. Topologically, residues 137–159 (WSANTIIRDFYNPVVPEAQKREM) are extracellular. The helical transmembrane segment at 160 to 180 (GAGLYVGWAAAALQLLGGALL) threads the bilayer. The Cytoplasmic segment spans residues 181–220 (CCSCPPREKKYTATKVVYSAPRSTGPGASLGTGYDRKDYV). Tyr-198 bears the Phosphotyrosine mark. Phosphoserine is present on residues Ser-199 and Ser-209. An interactions with TJP1, TJP2 and TJP3 region spans residues 219–220 (YV).

This sequence belongs to the claudin family. In terms of assembly, can form homo- and heteropolymers with other CLDN. Homopolymers interact with CLDN1 and CLDN2 homopolymers. Interacts in cis (within the same plasma membrane) with CLDN19. Directly interacts with TJP1/ZO-1, TJP2/ZO-2 and TJP3/ZO-3.

It localises to the cell junction. The protein localises to the tight junction. The protein resides in the cell membrane. Barrier-forming claudin. Plays a major role in tight junction-specific obliteration of the intercellular space, through calcium-independent cell-adhesion activity. This Homo sapiens (Human) protein is Claudin-3 (CLDN3).